The chain runs to 504 residues: MAQIDFRNKINWHRRYRSPQGVKTEHEILRIFESDRGRIINSPAIRRLQQKTQVFPLERNAAVRTRLTHSMEVQQVGRYIAKEILSRLKELKLLEQYGLDELTGPFESIVEMSCLMHDIGNPPFGHFGEAAINDWFRQRLHPADAESQPLSDDRCAVAALRLREGEESLNDIRRKVRQDLCHFEGNAQGIRLVHTLMRMNLTWAQVGGILKYTRPAWWRGETPATHRYLMKKPGYYLSEAPYIERLRKELALAPYSRFPLTWIMEAADDISYCVADLEDAVEKRIFSVEQLYHHLYEAWGHHEKGSLFTQVVENAWEKSRSNSLSRSTEDQFFMYLRVNTLNKLVPYAAQRFIDNLPQIFDGSFNHALLEDASSFSQLLELYKNVAIKHVFSHPDVEQLELQGYRVISGLLEIYQPLLRMSLVDFRELVEKERVKRFPIESRLFQKLSTRHRLAYVEAVSKLSPEAPEYPTLEYYYRCRLIQDYISGMTDLYAWDEYRRLMAVE.

The HD domain maps to 66–273 (RLTHSMEVQQ…MEAADDISYC (208 aa)).

The protein belongs to the dGTPase family. Type 1 subfamily. In terms of assembly, homotetramer. Requires Mg(2+) as cofactor.

It catalyses the reaction dGTP + H2O = 2'-deoxyguanosine + triphosphate + H(+). In terms of biological role, dGTPase preferentially hydrolyzes dGTP over the other canonical NTPs. This Citrobacter koseri (strain ATCC BAA-895 / CDC 4225-83 / SGSC4696) protein is Deoxyguanosinetriphosphate triphosphohydrolase.